We begin with the raw amino-acid sequence, 252 residues long: Adenosylcobinamide-GDP ribazoletransferase (252 aa).

Helical transmembrane passes span 34-54, 55-75, 113-133, 138-158, 174-194, 198-218, and 230-250; these read GASFMPLVGVIVGGIQWIIYK, LCIIIFSLNVSIVIVILAGIV, YACLAIIIDILLKYSFFCSIV, LIIIIAPVMSRFSIVFIAFIG, IGKWQLFWAAFITVITLFFLM, FIYVIILIFAGLFMSFLFNVF, and LLGANNEIVEILTMVMLCVII.

The protein belongs to the CobS family. Mg(2+) serves as cofactor.

It localises to the cell membrane. It carries out the reaction alpha-ribazole + adenosylcob(III)inamide-GDP = adenosylcob(III)alamin + GMP + H(+). The catalysed reaction is alpha-ribazole 5'-phosphate + adenosylcob(III)inamide-GDP = adenosylcob(III)alamin 5'-phosphate + GMP + H(+). It participates in cofactor biosynthesis; adenosylcobalamin biosynthesis; adenosylcobalamin from cob(II)yrinate a,c-diamide: step 7/7. Its function is as follows. Joins adenosylcobinamide-GDP and alpha-ribazole to generate adenosylcobalamin (Ado-cobalamin). Also synthesizes adenosylcobalamin 5'-phosphate from adenosylcobinamide-GDP and alpha-ribazole 5'-phosphate. The chain is Adenosylcobinamide-GDP ribazoletransferase from Clostridium kluyveri (strain NBRC 12016).